The primary structure comprises 220 residues: MNKSIFIQLQDQIDKEHSIREKLTAEVDLLDEKLRVLQLLLANCEQNLENQEEILEALEIIKSKTRGLAELASNFPYYKYNGVWDRSIQKVVYLYLLASWTGRLDKSLRPTYSLLSLSEVGQILQVPVFPEESTFHLSIEQYLHAVLSLCSELARQSVNSVISGNYHIPFEALNTIQKVHSSFQVLSLKNDSLRRHFDGLKYDLKRSEDVVYDLRIHKLV.

This sequence belongs to the translin family. In terms of assembly, forms an octameric ring-shaped structure, which is capable of binding DNA or RNA.

It is found in the cytoplasm. The protein resides in the nucleus. Its function is as follows. DNA-binding protein that specifically recognizes consensus sequences at the breakpoint junctions in chromosomal translocations. Selectively binds single-stranded d(GT)n and d(GTT)n microsatellite repeats. Has much higher affinities for the homologous RNA sequences (GU)n and (GUU)n. Does not bind double-stranded DNA. Has a role in meiosis. This Schizosaccharomyces pombe (strain 972 / ATCC 24843) (Fission yeast) protein is Translin-1 (tsn1).